Consider the following 409-residue polypeptide: uncharacterized protein (409 aa).

The region spanning 5-274 is the OBG-type G domain; that stretch reads ILIGFVGKPS…LAKQGFVKYE (270 aa). Residues 11 to 18 and 83 to 87 each bind GTP; these read GKPSSGKS and DVAGL.

The protein belongs to the TRAFAC class OBG-HflX-like GTPase superfamily. OBG GTPase family.

It localises to the cytoplasm. The protein resides in the nucleus. This is an uncharacterized protein from Schizosaccharomyces pombe (strain 972 / ATCC 24843) (Fission yeast).